The sequence spans 249 residues: Vesicle-associated membrane protein-associated protein A (249 aa).

A2 carries the N-acetylalanine modification. The Cytoplasmic portion of the chain corresponds to 2–227; sequence ASASGAMAKH…VSFRDNVTSP (226 aa). Residues 14-131 form the MSP domain; that stretch reads ILVLDPPSDL…MDSKLRCVFE (118 aa). Residues 50 to 53 are phosphorylated FFAT motif binding; that stretch reads KVKT. At K125 the chain carries N6-acetyllysine. Basic and acidic residues predominate over residues 135–144; it reads ENDKLNDMEP. The tract at residues 135-166 is disordered; the sequence is ENDKLNDMEPSKAVPLNASKQDGPLPKPHSVS. S166 is subject to Phosphoserine. A coiled-coil region spans residues 168–207; sequence NDTETRKLMEECKRLQGEMMKLSEENRHLRDEGLRLRKVA. T170 carries the phosphothreonine modification. Phosphoserine occurs at positions 214, 216, and 219. Residues 228–248 form a helical; Anchor for type IV membrane protein membrane-spanning segment; it reads LPSLLVVIAAIFIGFFLGKFI.

This sequence belongs to the VAMP-associated protein (VAP) (TC 9.B.17) family. As to quaternary structure, homodimer; disulfide-linked. Heterodimer with VAPB. Interacts with VAMP1, VAMP2, STX1A, BET1, SEC22C and with the C-terminal domain of OCLN. Interacts (via MSP domain) with OSBPL1A (via FFAT motif). Interacts (via MSP domain) with ZFYVE27; may retain ZFYVE27 in the endoplasmic reticulum and regulate its function in cell projections formation. Interacts with OSBP. Interacts (via C-terminus) with RSAD2/viperin (via C-terminus). Interacts with IFITM3. Interacts with OSBPL3 (phosphorylated form). Interacts with KIF5A in a ZFYVE27-dependent manner. Interacts (via MSP domain) with STARD3 (via phosphorylated FFAT motif); this interaction recruits VAPA to the endosome. Interacts with STARD3NL (via FFAT motif). Interacts with CERT1. Interacts with PLEKHA3 and SACM1L to form a ternary complex. Interacts with VPS13A (via FFAT motif). Interacts with RB1CC1 (via phosphorylated FFAT motif), MIGA2 (via phosphorylated FFAT motif), RMDN3 (via phosphorylated FFAT motif), KCNB1 (via phosphorylated FFAT motif) and KCNB2 (via phosphorylated FFAT motif). Interacts (via MSP domain) with WDR44; the interactions connect the endoplasmic reticulum (ER) with the endosomal tubule. In terms of tissue distribution, ubiquitous.

It is found in the endoplasmic reticulum membrane. The protein localises to the cell membrane. Its subcellular location is the cell junction. The protein resides in the tight junction. It localises to the nucleus membrane. Functionally, endoplasmic reticulum (ER)-anchored protein that mediates the formation of contact sites between the ER and endosomes via interaction with FFAT motif-containing proteins such as STARD3 or WDR44. STARD3-VAPA interaction enables cholesterol transfer from the ER to endosomes. Via interaction with WDR44 participates in neosynthesized protein export. In addition, recruited to the plasma membrane through OSBPL3 binding. The OSBPL3-VAPA complex stimulates RRAS signaling which in turn attenuates integrin beta-1 (ITGB1) activation at the cell surface. With OSBPL3, may regulate ER morphology. May play a role in vesicle trafficking. In Rattus norvegicus (Rat), this protein is Vesicle-associated membrane protein-associated protein A.